The sequence spans 167 residues: Anaerobic nitrite reductase NSHB4 (167 aa).

The 151-residue stretch at 12 to 162 folds into the Globin domain; the sequence is RFTEEQEALV…LVAAIKEGMK (151 aa). Residues 45–49 carry the Homodimerization motif; sequence EVAPS. 5 residues coordinate heme b: Ser55, His73, Arg103, Thr107, and His108. A Homodimerization motif is present at residues 115–127; it reads DTHFEVARFALLE.

This sequence belongs to the plant globin family. As to quaternary structure, homodimer. It depends on heme b as a cofactor.

It localises to the cytoplasm. Its subcellular location is the nucleus. The enzyme catalyses Fe(III)-heme b-[protein] + nitric oxide + H2O = Fe(II)-heme b-[protein] + nitrite + 2 H(+). Its function is as follows. Phytoglobin that reduces nitrite to nitric oxide under anoxic conditions (e.g. during flooding or in waterlogged soil). May not function as an oxygen storage or transport protein. Has an unusually high affinity for O(2) through an hexacoordinate heme iron because of a very low dissociation constant. This is Anaerobic nitrite reductase NSHB4 from Oryza sativa subsp. indica (Rice).